The primary structure comprises 314 residues: Formimidoylglutamase (314 aa).

H127, D151, H153, D155, D239, and D241 together coordinate Mn(2+).

Belongs to the arginase family. It depends on Mn(2+) as a cofactor.

The enzyme catalyses N-formimidoyl-L-glutamate + H2O = formamide + L-glutamate. It functions in the pathway amino-acid degradation; L-histidine degradation into L-glutamate; L-glutamate from N-formimidoyl-L-glutamate (hydrolase route): step 1/1. Its function is as follows. Catalyzes the conversion of N-formimidoyl-L-glutamate to L-glutamate and formamide. In Corynebacterium efficiens (strain DSM 44549 / YS-314 / AJ 12310 / JCM 11189 / NBRC 100395), this protein is Formimidoylglutamase.